The sequence spans 494 residues: Glutamyl-tRNA(Gln) amidotransferase subunit A (494 aa).

Residues Lys79 and Ser159 each act as charge relay system in the active site. Catalysis depends on Ser183, which acts as the Acyl-ester intermediate.

It belongs to the amidase family. GatA subfamily. In terms of assembly, heterotrimer of A, B and C subunits.

The catalysed reaction is L-glutamyl-tRNA(Gln) + L-glutamine + ATP + H2O = L-glutaminyl-tRNA(Gln) + L-glutamate + ADP + phosphate + H(+). Its function is as follows. Allows the formation of correctly charged Gln-tRNA(Gln) through the transamidation of misacylated Glu-tRNA(Gln) in organisms which lack glutaminyl-tRNA synthetase. The reaction takes place in the presence of glutamine and ATP through an activated gamma-phospho-Glu-tRNA(Gln). This Bartonella tribocorum (strain CIP 105476 / IBS 506) protein is Glutamyl-tRNA(Gln) amidotransferase subunit A.